Reading from the N-terminus, the 898-residue chain is Protein argonaute 1 (898 aa).

Positions 1 to 52 (MLALNAGSQYPGRGRGRGRGDGGNRVHKHDGINRYHGGFRGGRGGGGGGFRD) are disordered. A compositionally biased stretch (basic and acidic residues) spans 18-33 (GRGDGGNRVHKHDGIN). The segment covering 38-50 (GFRGGRGGGGGGF) has biased composition (gly residues). The PAZ domain maps to 283–378 (KCSDEMRRLR…IFADRTKMSR (96 aa)). A Piwi domain is found at 542-883 (FAMVKLRTKE…YARKYGSLKS (342 aa)).

The protein belongs to the argonaute family.

The protein localises to the cytoplasm. Its function is as follows. Involved in RNA-mediated gene silencing (RNAi) of mobile elements and repeats including retroposons SLACS (Spliced Leader Associated Conserved Sequence), TATE (Telomere-Associated Transposable Element) and TAS-like sequences (Telomere Associated Sequence), and a family of 74-nucleotide long tandem repeats, CIR74. Predominantly binds to siRNAs derived from SLACS and TATE transposable elements and to a lesser extent to siRNAs from TAS-like and CIR74 elements. The protein is Protein argonaute 1 of Leishmania braziliensis.